The chain runs to 854 residues: Armadillo repeat-containing protein 2 (854 aa).

3 disordered regions span residues 1-116 (MLSS…SFPK), 140-194 (QGML…PLLT), and 206-255 (EVSL…ETDT). The segment covering 58 to 73 (PASSRSPENRPPSSFS) has biased composition (low complexity). 2 stretches are compositionally biased toward polar residues: residues 74–87 (LHAS…SKPI) and 162–187 (KPVS…TGQL). ARM repeat units lie at residues 255-294 (TEVD…RTLE), 298-337 (MLGK…ALKV), 356-396 (EKND…ALKF), 401-442 (PGFL…HLLV), 455-496 (PLTR…KLTS), 499-540 (DCCA…NLTA), 544-583 (QARE…EAKP), 585-605 (AEAE…AIHP), 606-649 (RIGP…NLSF), 651-692 (QVKS…NLSQ), 694-733 (HDVC…NLTV), and 735-777 (KEKR…NFSE).

In terms of biological role, required for sperm flagellum axoneme organization and function. Involved in axonemal central pair complex assembly and/or stability. The sequence is that of Armadillo repeat-containing protein 2 from Mus musculus (Mouse).